We begin with the raw amino-acid sequence, 530 residues long: Nectin-2 (530 aa).

Positions 1 to 31 are cleaved as a signal peptide; sequence MARAAVLPPSRLSPTLPLLPLLLLLLQETGA. Residues 32 to 147 form the Ig-like V-type domain; sequence QDVRVRVLPE…NGTRRGVTWL (116 aa). Over 32–351 the chain is Extracellular; the sequence is QDVRVRVLPE…STAGAGATGG (320 aa). Cys54 and Cys131 are joined by a disulfide. Asn128 and Asn138 each carry an N-linked (GlcNAc...) asparagine glycan. 2 Ig-like C2-type domains span residues 153–247 and 252–337; these read PENH…VTLS and PEVS…VILV. 2 disulfide bridges follow: Cys174–Cys229 and Cys274–Cys320. An N-linked (GlcNAc...) asparagine glycan is attached at Asn315. Residues 352–372 form a helical membrane-spanning segment; sequence IIGGIIAAIIATAVAGTGILI. Residues 373–530 lie on the Cytoplasmic side of the membrane; that stretch reads CRQQRKEQRL…DFFVSRAMYV (158 aa). Residues 382–407 form a disordered region; the sequence is LQAADEEEELEGPPSYKPPTPKAKLE. The residue at position 401 (Thr401) is a Phosphothreonine. Phosphoserine is present on Ser424.

It belongs to the nectin family. As to quaternary structure, can form trans-heterodimers with NECTIN3. Interacts with CD226 or with PVRIG; these interactions are competitive and have a differential functional outcome on T-cell activation, either positive or negative, respectively. Binds with low affinity to TIGIT. As to expression, brain, spinal cord, spleen, kidney, heart and liver.

Its subcellular location is the cell membrane. Its function is as follows. Modulator of T-cell signaling. Can be either a costimulator of T-cell function, or a coinhibitor, depending on the receptor it binds to. Upon binding to CD226, stimulates T-cell proliferation and cytokine production, including that of IL2, IL5, IL10, IL13, and IFNG. Upon interaction with PVRIG, inhibits T-cell proliferation. These interactions are competitive. Probable cell adhesion protein. The sequence is that of Nectin-2 from Mus musculus (Mouse).